The chain runs to 373 residues: CXADR-like membrane protein (373 aa).

The first 18 residues, 1–18 (MSLLLLLLLVSYYVGTLG), serve as a signal peptide directing secretion. Ig-like C2-type domains are found at residues 19 to 127 (THTE…VILK) and 135 to 224 (PKCE…VRVT). Residues 19-235 (THTEIKRVAE…QYVQSIGMVA (217 aa)) are Extracellular-facing. 2 disulfide bridges follow: Cys-35–Cys-111 and Cys-153–Cys-208. Residues Asn-74 and Asn-197 are each glycosylated (N-linked (GlcNAc...) asparagine). The chain crosses the membrane as a helical span at residues 236 to 256 (GAVTGIVAGALLIFLLVWLLI). The Cytoplasmic portion of the chain corresponds to 257–373 (RRKDKERYEE…PSQSRAFQTV (117 aa)). Residues 264–281 (YEEEERPNEIREDAEAPK) show a composition bias toward basic and acidic residues. Residues 264 to 373 (YEEEERPNEI…PSQSRAFQTV (110 aa)) are disordered. Low complexity predominate over residues 288 to 314 (SSSSSGSRSSRSGSSSTRSTANSASRS). The span at 355-373 (KAETTPSMIPSQSRAFQTV) shows a compositional bias: polar residues.

Predominantly expressed in epithelial cells within different tissues and in the white adipose tissue. Expressed at high levels in small intestine and placenta, at intermediate levels in the heart, skeletal muscle, colon, spleen, kidney and lung and at low levels in the liver and peripheral blood leukocytes. Highly abundant in the intestine during embryo and fetal development (at protein level).

It localises to the cell junction. Its subcellular location is the tight junction. The protein resides in the cell membrane. May be involved in the cell-cell adhesion. May play a role in adipocyte differentiation and development of obesity. Is required for normal small intestine development. The chain is CXADR-like membrane protein (CLMP) from Homo sapiens (Human).